A 448-amino-acid chain; its full sequence is Adenylosuccinate synthetase (448 aa).

GTP contacts are provided by residues 22-28 (GDEGKGK) and 50-52 (GHT). The active-site Proton acceptor is the Asp23. Residues Asp23 and Gly50 each contribute to the Mg(2+) site. IMP contacts are provided by residues 23 to 26 (DEGK), 48 to 51 (NAGH), Thr139, Arg153, Gln234, Thr249, and Arg321. His51 serves as the catalytic Proton donor. 317–323 (SVTGRPR) provides a ligand contact to substrate. Residues Arg323, 349–351 (KLD), and 431–433 (STG) each bind GTP.

This sequence belongs to the adenylosuccinate synthetase family. As to quaternary structure, homodimer. The cofactor is Mg(2+).

It localises to the cytoplasm. The enzyme catalyses IMP + L-aspartate + GTP = N(6)-(1,2-dicarboxyethyl)-AMP + GDP + phosphate + 2 H(+). The protein operates within purine metabolism; AMP biosynthesis via de novo pathway; AMP from IMP: step 1/2. In terms of biological role, plays an important role in the de novo pathway of purine nucleotide biosynthesis. Catalyzes the first committed step in the biosynthesis of AMP from IMP. In Burkholderia thailandensis (strain ATCC 700388 / DSM 13276 / CCUG 48851 / CIP 106301 / E264), this protein is Adenylosuccinate synthetase.